The following is a 122-amino-acid chain: Large ribosomal subunit protein uL14 (122 aa).

Belongs to the universal ribosomal protein uL14 family. Part of the 50S ribosomal subunit. Forms a cluster with proteins L3 and L19. In the 70S ribosome, L14 and L19 interact and together make contacts with the 16S rRNA in bridges B5 and B8.

Functionally, binds to 23S rRNA. Forms part of two intersubunit bridges in the 70S ribosome. The chain is Large ribosomal subunit protein uL14 from Herpetosiphon aurantiacus (strain ATCC 23779 / DSM 785 / 114-95).